The chain runs to 232 residues: Orotate phosphoribosyltransferase (232 aa).

Lys28 is a binding site for 5-phospho-alpha-D-ribose 1-diphosphate. Phe36–Phe37 is an orotate binding site. 5-phospho-alpha-D-ribose 1-diphosphate-binding positions include Tyr78–Lys79, Arg108, Lys109, Lys112, His114, and Asp134–Ala142. Residues Thr138 and Arg166 each contribute to the orotate site.

The protein belongs to the purine/pyrimidine phosphoribosyltransferase family. PyrE subfamily. As to quaternary structure, homodimer.

It carries out the reaction orotidine 5'-phosphate + diphosphate = orotate + 5-phospho-alpha-D-ribose 1-diphosphate. It functions in the pathway pyrimidine metabolism; UMP biosynthesis via de novo pathway; UMP from orotate: step 1/2. In terms of biological role, catalyzes the transfer of a ribosyl phosphate group from 5-phosphoribose 1-diphosphate to orotate, leading to the formation of orotidine monophosphate (OMP). The protein is Orotate phosphoribosyltransferase (URA5) of Sordaria macrospora.